Here is a 130-residue protein sequence, read N- to C-terminus: UPF0251 protein Mevan_1492 (130 aa).

It belongs to the UPF0251 family.

This chain is UPF0251 protein Mevan_1492, found in Methanococcus vannielii (strain ATCC 35089 / DSM 1224 / JCM 13029 / OCM 148 / SB).